The sequence spans 262 residues: Glucosamine-6-phosphate deaminase (262 aa).

The active-site Proton acceptor; for enolization step is the aspartate 63. Catalysis depends on asparagine 129, which acts as the For ring-opening step. The active-site Proton acceptor; for ring-opening step is histidine 131. Catalysis depends on glutamate 136, which acts as the For ring-opening step.

The protein belongs to the glucosamine/galactosamine-6-phosphate isomerase family. NagB subfamily.

It catalyses the reaction alpha-D-glucosamine 6-phosphate + H2O = beta-D-fructose 6-phosphate + NH4(+). Its pathway is amino-sugar metabolism; N-acetylneuraminate degradation; D-fructose 6-phosphate from N-acetylneuraminate: step 5/5. Its function is as follows. Catalyzes the reversible isomerization-deamination of glucosamine 6-phosphate (GlcN6P) to form fructose 6-phosphate (Fru6P) and ammonium ion. This chain is Glucosamine-6-phosphate deaminase, found in Bacillus cereus (strain ZK / E33L).